The following is a 31-amino-acid chain: Cytochrome b6-f complex subunit 6 (31 aa).

A helical transmembrane segment spans residues 7 to 25 (YSGFLLAAPIPASAPFTGL).

Belongs to the PetL family. In terms of assembly, the 4 large subunits of the cytochrome b6-f complex are cytochrome b6, subunit IV (17 kDa polypeptide, PetD), cytochrome f and the Rieske protein, while the 4 small subunits are PetG, PetL, PetM and PetN. The complex functions as a dimer.

Its subcellular location is the plastid. The protein localises to the chloroplast thylakoid membrane. In terms of biological role, component of the cytochrome b6-f complex, which mediates electron transfer between photosystem II (PSII) and photosystem I (PSI), cyclic electron flow around PSI, and state transitions. PetL is important for photoautotrophic growth as well as for electron transfer efficiency and stability of the cytochrome b6-f complex. This is Cytochrome b6-f complex subunit 6 from Huperzia lucidula (Shining clubmoss).